A 154-amino-acid chain; its full sequence is Myoglobin (154 aa).

Positions 2 to 148 (GLSDGEWQLV…FRKDMASNYK (147 aa)) constitute a Globin domain. S4 is modified (phosphoserine). Position 65 (H65) interacts with nitrite. H65 contributes to the O2 binding site. Position 68 is a phosphothreonine (T68). H94 provides a ligand contact to heme b.

Belongs to the globin family. As to quaternary structure, monomeric.

It is found in the cytoplasm. The protein localises to the sarcoplasm. The enzyme catalyses Fe(III)-heme b-[protein] + nitric oxide + H2O = Fe(II)-heme b-[protein] + nitrite + 2 H(+). It carries out the reaction H2O2 + AH2 = A + 2 H2O. In terms of biological role, monomeric heme protein which primary function is to store oxygen and facilitate its diffusion within muscle tissues. Reversibly binds oxygen through a pentacoordinated heme iron and enables its timely and efficient release as needed during periods of heightened demand. Depending on the oxidative conditions of tissues and cells, and in addition to its ability to bind oxygen, it also has a nitrite reductase activity whereby it regulates the production of bioactive nitric oxide. Under stress conditions, like hypoxia and anoxia, it also protects cells against reactive oxygen species thanks to its pseudoperoxidase activity. This Gorilla gorilla beringei (Mountain gorilla) protein is Myoglobin (MB).